A 328-amino-acid polypeptide reads, in one-letter code: Integrator complex subunit 12 (328 aa).

Residues 1–45 form a sufficient for binding to IntS1 and IntS9 and for 3'-end snRNA processing region; it reads MAANIAAAAAAAQEVDPVLKKAIKLLHSSNPTSAAELRLLLDEAL. The segment at 128–185 adopts a PHD-type zinc-finger fold; it reads DLNCCVCGEMVFTATNRLIECSKCGAMYHQECHKPPITKEEAADDQEQNWQCDTCCNK. Composition is skewed to low complexity over residues 215-233, 241-264, 274-283, and 292-311; these read KAKS…NSSS, SSST…SSSS, KSTAASSLSA, and SSGT…SKSS. The interval 215–328 is disordered; the sequence is KAKSSVASSR…GSSSKRRSKQ (114 aa).

The protein belongs to the Integrator subunit 12 family. Belongs to the multiprotein complex Integrator, at least composed of IntS1, IntS2, IntS3, IntS4, omd/IntS5, IntS6, defl/IntS7, IntS8, IntS9, IntS10, IntS11, IntS12, asun/IntS13, IntS14 and IntS15. The core complex associates with protein phosphatase 2A subunits mts/PP2A and Pp2A-29B, to form the Integrator-PP2A (INTAC) complex. Within the complex, interacts with IntS1 and IntS9. Interaction with IntS1 is likely to be important for promoting 3'-end processing of snRNAs.

The protein localises to the nucleus. Component of the integrator complex, a multiprotein complex that terminates RNA polymerase II (Pol II) transcription in the promoter-proximal region of genes. The integrator complex provides a quality checkpoint during transcription elongation by driving premature transcription termination of transcripts that are unfavorably configured for transcriptional elongation: the complex terminates transcription by (1) catalyzing dephosphorylation of the C-terminal domain (CTD) of Pol II subunit Polr2A/Rbp1 and Spt5, and (2) degrading the exiting nascent RNA transcript via endonuclease activity. The integrator complex is also involved in the 3'-end processing of the U7 snRNA, and also the spliceosomal snRNAs U1, U2, U4 and U5. Required for the normal expression of the Integrator complex component IntS1. The polypeptide is Integrator complex subunit 12 (Drosophila melanogaster (Fruit fly)).